Consider the following 420-residue polypeptide: Glutamyl-tRNA reductase (420 aa).

Residues 49–52 (TCNR), Ser-109, 114–116 (EPQ), and Gln-120 each bind substrate. Cys-50 (nucleophile) is an active-site residue. Position 189–194 (189–194 (GAGETI)) interacts with NADP(+).

It belongs to the glutamyl-tRNA reductase family. As to quaternary structure, homodimer.

It carries out the reaction (S)-4-amino-5-oxopentanoate + tRNA(Glu) + NADP(+) = L-glutamyl-tRNA(Glu) + NADPH + H(+). The protein operates within porphyrin-containing compound metabolism; protoporphyrin-IX biosynthesis; 5-aminolevulinate from L-glutamyl-tRNA(Glu): step 1/2. Functionally, catalyzes the NADPH-dependent reduction of glutamyl-tRNA(Glu) to glutamate 1-semialdehyde (GSA). The chain is Glutamyl-tRNA reductase from Edwardsiella ictaluri (strain 93-146).